Consider the following 236-residue polypeptide: Ureidoacrylate amidohydrolase RutB (236 aa).

The Proton acceptor role is filled by Asp24. Lys133 is a catalytic residue. The active-site Nucleophile is the Cys166.

It belongs to the isochorismatase family. RutB subfamily.

The catalysed reaction is (Z)-3-ureidoacrylate + H2O + H(+) = (Z)-3-aminoacrylate + NH4(+) + CO2. It catalyses the reaction (Z)-3-ureidoacrylate + H2O = (Z)-3-aminoacrylate + carbamate + H(+). It carries out the reaction (Z)-2-methylureidoacrylate + H2O + H(+) = (Z)-2-methylaminoacrylate + NH4(+) + CO2. In terms of biological role, hydrolyzes ureidoacrylate to form aminoacrylate and carbamate. The carbamate hydrolyzes spontaneously, thereby releasing one of the nitrogen atoms of the pyrimidine ring as ammonia and one of its carbon atoms as CO2. The sequence is that of Ureidoacrylate amidohydrolase RutB from Klebsiella pneumoniae subsp. pneumoniae (strain ATCC 700721 / MGH 78578).